We begin with the raw amino-acid sequence, 581 residues long: Arginine--tRNA ligase (581 aa).

A 'HIGH' region motif is present at residues 123 to 133 (PNVAKEMHVGH).

Belongs to the class-I aminoacyl-tRNA synthetase family. Monomer.

The protein resides in the cytoplasm. The catalysed reaction is tRNA(Arg) + L-arginine + ATP = L-arginyl-tRNA(Arg) + AMP + diphosphate. This chain is Arginine--tRNA ligase, found in Blochmanniella pennsylvanica (strain BPEN).